Reading from the N-terminus, the 232-residue chain is Large ribosomal subunit protein uL1 (232 aa).

Belongs to the universal ribosomal protein uL1 family. As to quaternary structure, part of the 50S ribosomal subunit.

Binds directly to 23S rRNA. The L1 stalk is quite mobile in the ribosome, and is involved in E site tRNA release. In terms of biological role, protein L1 is also a translational repressor protein, it controls the translation of the L11 operon by binding to its mRNA. The polypeptide is Large ribosomal subunit protein uL1 (Burkholderia mallei (strain NCTC 10247)).